Reading from the N-terminus, the 273-residue chain is Large ribosomal subunit protein uL2 (273 aa).

Positions 228–273 are disordered; sequence VDHPHGGGEGKTSGGRHPVTPWGFPTKGKKTRKNKRTSKFIIKKRK. Over residues 254-273 the composition is skewed to basic residues; it reads KGKKTRKNKRTSKFIIKKRK.

The protein belongs to the universal ribosomal protein uL2 family. In terms of assembly, part of the 50S ribosomal subunit. Forms a bridge to the 30S subunit in the 70S ribosome.

In terms of biological role, one of the primary rRNA binding proteins. Required for association of the 30S and 50S subunits to form the 70S ribosome, for tRNA binding and peptide bond formation. It has been suggested to have peptidyltransferase activity; this is somewhat controversial. Makes several contacts with the 16S rRNA in the 70S ribosome. This is Large ribosomal subunit protein uL2 from Rickettsia bellii (strain OSU 85-389).